We begin with the raw amino-acid sequence, 327 residues long: MSHLAELVANAAAAINQASDVAALDNVRVEYLGKKGHLTLQMTTLRDLPPEERPAAGAVINAAKEQVQQALNARKAELESAALDARLAAETIDISLPGRRIENGGLHPVTRTIDRIESFFGELGFTVATGPEIEDDYHNFDALNIPGHHPARADHDTFWFDATRLLRTQTSGVQIRTMKAQQPPIRIIAPGRVYRNDYDQTHTPMFHQMEGLIVDTNISFTNLKGTLHDFLRNFFEEDLQIRFRPSYFPFTEPSAEVDVMGKNGKWLEVLGCGMVHPNVLRNVGIDPEIYSGFAFGMGMERLTMLRYGVTDLRSFFENDLRFLKQFK.

Residue E252 participates in Mg(2+) binding.

It belongs to the class-II aminoacyl-tRNA synthetase family. Phe-tRNA synthetase alpha subunit type 1 subfamily. Tetramer of two alpha and two beta subunits. The cofactor is Mg(2+).

The protein localises to the cytoplasm. The enzyme catalyses tRNA(Phe) + L-phenylalanine + ATP = L-phenylalanyl-tRNA(Phe) + AMP + diphosphate + H(+). This chain is Phenylalanine--tRNA ligase alpha subunit, found in Salmonella newport (strain SL254).